The following is a 200-amino-acid chain: Inner membrane-spanning protein YciB (200 aa).

The next 6 membrane-spanning stretches (helical) occupy residues 1–21, 37–57, 66–86, 103–123, 136–156, and 167–187; these read MPPL…FFAN, IGAP…IALA, LAIM…LTLW, LFGG…GYVF, KLTL…EIVW, and FKVW…MPLI.

The protein belongs to the YciB family.

It localises to the cell inner membrane. Plays a role in cell envelope biogenesis, maintenance of cell envelope integrity and membrane homeostasis. In Brucella melitensis biotype 1 (strain ATCC 23456 / CCUG 17765 / NCTC 10094 / 16M), this protein is Inner membrane-spanning protein YciB.